The primary structure comprises 238 residues: Uridylate kinase (238 aa).

An ATP-binding site is contributed by 12–15; that stretch reads KLSG. Residue glycine 54 participates in UMP binding. ATP-binding residues include glycine 55 and arginine 59. Residues aspartate 74 and 135-142 contribute to the UMP site; that span reads TGNPFFTT. ATP is bound by residues threonine 162, tyrosine 168, and aspartate 171.

It belongs to the UMP kinase family. As to quaternary structure, homohexamer.

The protein localises to the cytoplasm. It carries out the reaction UMP + ATP = UDP + ADP. The protein operates within pyrimidine metabolism; CTP biosynthesis via de novo pathway; UDP from UMP (UMPK route): step 1/1. With respect to regulation, inhibited by UTP. Catalyzes the reversible phosphorylation of UMP to UDP. This chain is Uridylate kinase, found in Methylobacillus flagellatus (strain ATCC 51484 / DSM 6875 / VKM B-1610 / KT).